We begin with the raw amino-acid sequence, 426 residues long: Histidine--tRNA ligase (426 aa).

This sequence belongs to the class-II aminoacyl-tRNA synthetase family. As to quaternary structure, homodimer.

It is found in the cytoplasm. The catalysed reaction is tRNA(His) + L-histidine + ATP = L-histidyl-tRNA(His) + AMP + diphosphate + H(+). This is Histidine--tRNA ligase from Legionella pneumophila (strain Lens).